The chain runs to 489 residues: Dipeptide and tripeptide permease B (489 aa).

The Cytoplasmic segment spans residues 1–27 (MNTTAPTGLLQQPRPFFMIFFVELWER). The chain crosses the membrane as a helical span at residues 28 to 48 (FGYYGVQGILAVFFVKQLGFS). At 49 to 52 (QEQA) the chain is on the periplasmic side. The chain crosses the membrane as a helical span at residues 53 to 73 (FITFGAFAALVYGLISIGGYV). At 74 to 82 (GDHLLGTKR) the chain is on the cytoplasmic side. The chain crosses the membrane as a helical span at residues 83-103 (TLVLGAIVLAIGYFMTGMSLL). Over 104–106 (NPD) the chain is Periplasmic. The chain crosses the membrane as a helical span at residues 107–127 (LIFIALGTIAVGNGLFKANPA). The Cytoplasmic portion of the chain corresponds to 128-146 (SLLSKCYQPKDPRLDGAFT). The helical transmembrane segment at 147 to 167 (LFYMSINIGSLLSLSLAPVIA) threads the bilayer. Residues 168–172 (DKFGY) lie on the Periplasmic side of the membrane. Residues 173–193 (AVTYNLCGAGLIVALLVYFAC) form a helical membrane-spanning segment. The Cytoplasmic portion of the chain corresponds to 194 to 214 (RGMVKNIGSEPDHKPLRFRNL). The helical transmembrane segment at 215–235 (LLVLLGTVVMIFLCAWLMHNV) threads the bilayer. Residue lysine 236 is a topological domain, periplasmic. A helical transmembrane segment spans residues 237-257 (IANLVLIVLSIVVTIFFFREA). Topologically, residues 258–267 (FRLDKTGRNK) are cytoplasmic. Residues 268–288 (MFVAFILMIEAVLFYILYAQM) traverse the membrane as a helical segment. The Periplasmic portion of the chain corresponds to 289–315 (PTSLNFFAINNVHHEILGFAINPVSFQ). The chain crosses the membrane as a helical span at residues 316-338 (ALNPFWVVVASPVLAAIYTRLGS). Over 339–348 (KGKDLTMPMK) the chain is Cytoplasmic. The helical transmembrane segment at 349 to 369 (FTLGMFLCALGFLTAAAGMWF) threads the bilayer. The Periplasmic portion of the chain corresponds to 370–379 (ADAQGLTSPW). A helical membrane pass occupies residues 380-400 (FIVLVYLFQSLGELLISALGL). Over 401–410 (AMVAALVPQH) the chain is Cytoplasmic. Residues 411 to 431 (LMGFILGMWFLTQAAAFLLGG) traverse the membrane as a helical segment. Residues 432 to 454 (YVATFTAVPENITDPLQTLPIYT) lie on the Periplasmic side of the membrane. A helical transmembrane segment spans residues 455 to 475 (GVFSKIGLVTLAVTVVMAIMV). Residues 476 to 489 (PWLNRMINTPGTEQ) are Cytoplasmic-facing.

The protein belongs to the major facilitator superfamily. Proton-dependent oligopeptide transporter (POT/PTR) (TC 2.A.17) family. DtpB subfamily.

The protein resides in the cell inner membrane. Proton-dependent permease that transports di- and tripeptides. The polypeptide is Dipeptide and tripeptide permease B (Salmonella typhimurium (strain LT2 / SGSC1412 / ATCC 700720)).